The chain runs to 354 residues: Hydrophobic dipeptide epimerase (354 aa).

Residues Thr134, Lys159, and 159–161 each bind substrate; that span reads KIK. Asp189 provides a ligand contact to Mg(2+). Asn191 provides a ligand contact to substrate. Positions 215 and 240 each coordinate Mg(2+). Substrate is bound by residues Lys264, 292–295, and 318–320; these read CMAE and DLD.

Belongs to the mandelate racemase/muconate lactonizing enzyme family. It depends on Mg(2+) as a cofactor.

Functionally, catalyzes the epimerization of L-Ile-L-Tyr to L-Ile-D-Tyr (in vitro). Catalyzes the epimerization of dipeptides, with a preference for substrates with a hydrophobic or basic amino acid in the first position, followed by an aromatic residue in the second position. Has epimerase activity with L-Ile-L-Tyr, L-Val-L-Tyr and L-Arg-L-Tyr (in vitro). This Enterococcus faecalis (strain ATCC 700802 / V583) protein is Hydrophobic dipeptide epimerase.